A 735-amino-acid chain; its full sequence is DNA replication licensing factor mcm5-B (735 aa).

Residues 332–538 (IYETVAKSIA…RDMTLAKHVM (207 aa)) form the MCM domain. Arginine 372 contacts ADP. An Arginine finger motif is present at residues 513–516 (SRFD).

It belongs to the MCM family. In terms of assembly, component of the mcm2-7 complex (RLF-M). The complex forms a toroidal hexameric ring with the proposed subunit order mcm2-mcm6-mcm4-mcm7-mcm3-mcm5. The heterodimer of mmcm3/mcm5 interacts with mcm4, mmcm6, mcm7 and weakly with mcm2. Component of the CMG helicase complex, composed of the mcm2-7 complex, the GINS complex and cdc45.

Its subcellular location is the nucleus. It localises to the chromosome. The enzyme catalyses ATP + H2O = ADP + phosphate + H(+). In terms of biological role, acts as a component of the MCM2-7 complex (MCM complex) which is the replicative helicase essential for 'once per cell cycle' DNA replication initiation and elongation in eukaryotic cells. Core component of CDC45-MCM-GINS (CMG) helicase, the molecular machine that unwinds template DNA during replication, and around which the replisome is built. The active ATPase sites in the MCM2-7 ring are formed through the interaction surfaces of two neighboring subunits such that a critical structure of a conserved arginine finger motif is provided in trans relative to the ATP-binding site of the Walker A box of the adjacent subunit. The six ATPase active sites, however, are likely to contribute differentially to the complex helicase activity. This chain is DNA replication licensing factor mcm5-B (mcm5-b), found in Xenopus laevis (African clawed frog).